Reading from the N-terminus, the 860-residue chain is Leucine--tRNA ligase (860 aa).

The 'HIGH' region motif lies at 42 to 52 (PYPSGRLHMGH). The 'KMSKS' region signature appears at 619-623 (KMSKS). Lysine 622 serves as a coordination point for ATP.

This sequence belongs to the class-I aminoacyl-tRNA synthetase family.

The protein localises to the cytoplasm. The enzyme catalyses tRNA(Leu) + L-leucine + ATP = L-leucyl-tRNA(Leu) + AMP + diphosphate. The protein is Leucine--tRNA ligase of Escherichia coli O45:K1 (strain S88 / ExPEC).